The sequence spans 149 residues: Ribosome maturation factor RimP (149 aa).

This sequence belongs to the RimP family.

It localises to the cytoplasm. Its function is as follows. Required for maturation of 30S ribosomal subunits. This chain is Ribosome maturation factor RimP, found in Neisseria meningitidis serogroup A / serotype 4A (strain DSM 15465 / Z2491).